The sequence spans 676 residues: Palmitoyl-CoA ligase FUM16 (676 aa).

245 to 256 (IMYTSGSTGLPN) provides a ligand contact to AMP. An AMP-binding region spans residues 552–655 (KLESIYRTSQ…SGLVTPTMKL (104 aa)).

It belongs to the ATP-dependent AMP-binding enzyme family.

Its subcellular location is the endoplasmic reticulum. The protein operates within mycotoxin biosynthesis. Functionally, palmitoyl-CoA ligase; part of the gene cluster that mediates the biosynthesis of fumonisins B1 (FB1), B2 (FB2), B3 (FB3), and B4 (FB4), which are carcinogenic mycotoxins. Plays a role in the synthesis of ceramide and is involved in self-protection from fumonisin B1 toxicity. The biosynthesis starts with the FUM1-catalyzed carbon chain assembly from one molecule of acetyl-CoA, eight molecules of malonyl-CoA, and two molecules of methionine (in S-adenosyl form). The C18 polyketide chain is released from the enzyme by a nucleophilic attack of a carbanion, which is derived from R-carbon of alanine by decarboxylation, on the carbonyl carbon of polyketide acyl chain. This step is catalyzed by the pyridoxal 5'-phosphate-dependent aminoacyl transferase FUM8. The resultant 3-keto intermediate is then stereospecifically reduced to a 3-hydroxyl product by reductase FUM13. Subsequent oxidations at C-10 by the cytochrome P450 monooxygenase FUM2, C-14 and C-15 by FUM6, FUM12 or FUM15, tricarballylic esterification of the hydroxyl groups on C-14 and C-15 by acyltransferase FUM14, and C-5 hydroxylation by 2-keto-glutarate-dependent dioxygenase FUM3 furnish the biosynthesis of fumonisins. The tricarballylic moieties are most likely derived from the citric acid cycle, and their addition to the carbon backbone may involve FUM7, FUM10, FUM11 and FUM14. This Gibberella moniliformis (strain M3125 / FGSC 7600) (Maize ear and stalk rot fungus) protein is Palmitoyl-CoA ligase FUM16.